A 509-amino-acid polypeptide reads, in one-letter code: Aspartic proteinase oryzasin-1 (509 aa).

The signal sequence occupies residues 1–24 (MGTRSVALVLLAAVLLQALLPASA). Positions 25 to 67 (AEGLVRIALKKRPIDENSRVAARLSGEEGARRLGLRGANSLGG) are cleaved as a propeptide — activation peptide. In terms of domain architecture, Peptidase A1 spans 85-506 (YFGEIGVGTP…DYGKMRVGFA (422 aa)). Asp-103 is an active-site residue. A disulfide bridge links Cys-116 with Cys-122. Asn-252 is a glycosylation site (N-linked (GlcNAc...) asparagine). Cys-281 and Cys-285 are joined by a disulfide. Residue Asp-290 is part of the active site. Positions 315–420 (VVSQECKTVV…NQLCDKLPSP (106 aa)) constitute a Saposin B-type domain. 4 cysteine pairs are disulfide-bonded: Cys-320-Cys-414, Cys-345-Cys-386, Cys-351-Cys-383, and Cys-428-Cys-465. A glycan (N-linked (GlcNAc...) asparagine) is linked at Asn-400.

This sequence belongs to the peptidase A1 family.

The protein resides in the vacuole. Involved in the breakdown of propeptides of storage proteins in protein-storage vacuoles. In Oryza sativa subsp. japonica (Rice), this protein is Aspartic proteinase oryzasin-1.